The following is a 374-amino-acid chain: Glutamate 5-kinase (374 aa).

Lys16 is an ATP binding site. Substrate is bound by residues Ser56, Asp143, and Asn155. 175–176 (TD) contacts ATP. The PUA domain occupies 282–360 (RGRVVLDAGA…SEIEAVLGYV (79 aa)).

Belongs to the glutamate 5-kinase family.

It is found in the cytoplasm. It carries out the reaction L-glutamate + ATP = L-glutamyl 5-phosphate + ADP. Its pathway is amino-acid biosynthesis; L-proline biosynthesis; L-glutamate 5-semialdehyde from L-glutamate: step 1/2. Catalyzes the transfer of a phosphate group to glutamate to form L-glutamate 5-phosphate. This chain is Glutamate 5-kinase, found in Ralstonia nicotianae (strain ATCC BAA-1114 / GMI1000) (Ralstonia solanacearum).